The chain runs to 364 residues: Fructose-bisphosphate aldolase, non-muscle type (364 aa).

Residues Arg56 and Lys147 each coordinate substrate. Lys230 functions as the Schiff-base intermediate with dihydroxyacetone-P in the catalytic mechanism.

It belongs to the class I fructose-bisphosphate aldolase family. Homotetramer. As to expression, expressed mainly in the liver and also in brain and other tissues, except for the heart muscle.

The catalysed reaction is beta-D-fructose 1,6-bisphosphate = D-glyceraldehyde 3-phosphate + dihydroxyacetone phosphate. The protein operates within carbohydrate degradation; glycolysis; D-glyceraldehyde 3-phosphate and glycerone phosphate from D-glucose: step 4/4. The sequence is that of Fructose-bisphosphate aldolase, non-muscle type from Lethenteron camtschaticum (Japanese lamprey).